Consider the following 816-residue polypeptide: Stemod-13(17)-ene synthase (816 aa).

Polar residues predominate over residues 1-10 (MMLLSSSYSG). The interval 1 to 24 (MMLLSSSYSGGQFPGVSPLGTRPK) is disordered. Asp-553, Asp-557, Asn-698, Thr-702, and Glu-706 together coordinate Mg(2+). Positions 553 to 557 (DDFFD) match the DDXXD motif motif.

It belongs to the terpene synthase family. Mg(2+) is required as a cofactor.

The catalysed reaction is 9alpha-copalyl diphosphate = stemod-13(17)-ene + diphosphate. Its function is as follows. Catalyzes the conversion of syn-copalyl diphosphate to stemodene. The polypeptide is Stemod-13(17)-ene synthase (KSL11) (Oryza sativa subsp. indica (Rice)).